A 119-amino-acid polypeptide reads, in one-letter code: Outer membrane protein assembly factor BamE (119 aa).

The N-terminal stretch at 1-19 is a signal peptide; that stretch reads MQFTKWFIALPLAVTALSG. Cys-20 is lipidated: N-palmitoyl cysteine. The S-diacylglycerol cysteine moiety is linked to residue Cys-20.

The protein belongs to the BamE family. Part of the Bam complex.

It localises to the cell outer membrane. In terms of biological role, part of the outer membrane protein assembly complex, which is involved in assembly and insertion of beta-barrel proteins into the outer membrane. This is Outer membrane protein assembly factor BamE from Vibrio cholerae serotype O1 (strain ATCC 39541 / Classical Ogawa 395 / O395).